Reading from the N-terminus, the 102-residue chain is UPF0147 protein MTH_1407 (102 aa).

Belongs to the UPF0147 family.

This chain is UPF0147 protein MTH_1407, found in Methanothermobacter thermautotrophicus (strain ATCC 29096 / DSM 1053 / JCM 10044 / NBRC 100330 / Delta H) (Methanobacterium thermoautotrophicum).